A 322-amino-acid chain; its full sequence is Putative MgpC-like protein MPN_367 (322 aa).

Low complexity predominate over residues 1-48 (MVGSGAAGSASSLQGNGSNSSGLKSLLRSAPVSVPPSSTSNQTLSLSN). Disordered regions lie at residues 1–59 (MVGS…AVVS) and 118–145 (DATS…EPAL). Over residues 120–134 (TSTNLPHAAGASQTG) the composition is skewed to polar residues.

It belongs to the MgpC family.

The polypeptide is Putative MgpC-like protein MPN_367 (Mycoplasma pneumoniae (strain ATCC 29342 / M129 / Subtype 1) (Mycoplasmoides pneumoniae)).